Reading from the N-terminus, the 66-residue chain is Large ribosomal subunit protein bL33c (66 aa).

Belongs to the bacterial ribosomal protein bL33 family.

The protein resides in the plastid. The protein localises to the chloroplast. In Nasturtium officinale (Watercress), this protein is Large ribosomal subunit protein bL33c.